The following is a 311-amino-acid chain: Long form salivary protein D7L1 (311 aa).

Residues 1-16 (MKALIFLGAIIAGVLS) form the signal peptide. 2 disulfides stabilise this stretch: Cys-34-Cys-67 and Cys-63-Cys-120. ADP is bound by residues Ser-146, Arg-149, Tyr-153, and Lys-160. Cystine bridges form between Cys-170-Cys-202, Cys-183-Cys-311, and Cys-244-Cys-258. ADP is bound by residues Asn-281, Tyr-282, and Ser-283.

The protein belongs to the PBP/GOBP family. As to expression, distal lateral and medial lobes of female mosquito salivary gland (at protein level). Expressed in the head and thorax of the female mosquitoes, where the salivary glands are located. Expressed in salivary gland. Not detected in the female mosquito abdomen. Not detected in the male mosquito tissues.

Its subcellular location is the secreted. Its function is as follows. Modulates blood feeding of female mosquitoes on vertebrate species by binding and sequestering different mediators involved in the host response. Binds adenine, adenosine, AMP, ADP and ATP, with the highest affinity to ATP and ADP. Inhibits agonist-induced platelet aggregation and hemostasis. The polypeptide is Long form salivary protein D7L1 (Culex quinquefasciatus (Southern house mosquito)).